A 397-amino-acid chain; its full sequence is 1-deoxy-D-xylulose 5-phosphate reductoisomerase (397 aa).

Residues threonine 17, glycine 18, serine 19, isoleucine 20, asparagine 47, and asparagine 130 each contribute to the NADPH site. Lysine 131 serves as a coordination point for 1-deoxy-D-xylulose 5-phosphate. Residue glutamate 132 participates in NADPH binding. Aspartate 156 is a binding site for Mn(2+). Residues serine 157, glutamate 158, serine 182, and histidine 205 each contribute to the 1-deoxy-D-xylulose 5-phosphate site. Residue glutamate 158 participates in Mn(2+) binding. Glycine 211 serves as a coordination point for NADPH. Serine 218, asparagine 223, lysine 224, and glutamate 227 together coordinate 1-deoxy-D-xylulose 5-phosphate. Glutamate 227 provides a ligand contact to Mn(2+).

The protein belongs to the DXR family. The cofactor is Mg(2+). Mn(2+) is required as a cofactor.

It catalyses the reaction 2-C-methyl-D-erythritol 4-phosphate + NADP(+) = 1-deoxy-D-xylulose 5-phosphate + NADPH + H(+). The protein operates within isoprenoid biosynthesis; isopentenyl diphosphate biosynthesis via DXP pathway; isopentenyl diphosphate from 1-deoxy-D-xylulose 5-phosphate: step 1/6. In terms of biological role, catalyzes the NADPH-dependent rearrangement and reduction of 1-deoxy-D-xylulose-5-phosphate (DXP) to 2-C-methyl-D-erythritol 4-phosphate (MEP). In Rhizobium rhizogenes (strain K84 / ATCC BAA-868) (Agrobacterium radiobacter), this protein is 1-deoxy-D-xylulose 5-phosphate reductoisomerase.